The sequence spans 155 residues: Aspartate carbamoyltransferase regulatory chain (155 aa).

Residues Cys110, Cys115, Cys139, and Cys142 each contribute to the Zn(2+) site.

It belongs to the PyrI family. As to quaternary structure, contains catalytic and regulatory chains. Requires Zn(2+) as cofactor.

Functionally, involved in allosteric regulation of aspartate carbamoyltransferase. The sequence is that of Aspartate carbamoyltransferase regulatory chain from Yersinia pestis bv. Antiqua (strain Antiqua).